The primary structure comprises 251 residues: Developmental protein SEPALLATA 3 (251 aa).

Positions 3-57 (RGRVELKRIENKINRQVTFAKRRNGLLKKAYELSVLCDAEVALIIFSNRGKLYEF) constitute an MADS-box domain. A K-box domain is found at 91-181 (ELSSQQEYLK…RLRLADGYQM (91 aa)). Positions 94-177 (SQQEYLKLKE…NKTLRLRLAD (84 aa)) form a coiled coil.

As to quaternary structure, forms homodimers. Heterodimer with AP1 or AG capable of binding to CArG-box sequences. Binds AP3/PI to form a ternary complex. Interacts with AGL16. Interacts with TT16/AGL32.

It localises to the nucleus. Probable transcription factor active in inflorescence development and floral organogenesis. Functions with SEPALLATA1/AGL2 and SEPALLATA2/AGL4 to ensure proper development of petals, stamens and carpels and to prevent the indeterminate growth of the flower meristem. Interacts with APETALA1, AGAMOUS or APETALA3/PISTILLATA to form complexes, that could be involved in genes regulation during floral meristem development. Binds specifically to the CArG box DNA sequence 5'-CC (A/T)6 GG-3'. The chain is Developmental protein SEPALLATA 3 (SEP3) from Arabidopsis thaliana (Mouse-ear cress).